A 359-amino-acid chain; its full sequence is Probable F-box protein At3g61730 (359 aa).

Composition is skewed to basic and acidic residues over residues 1-14 (MKTR…DSRG) and 37-48 (QKNDIQREEDGR). The tract at residues 1–60 (MKTRSSDAEGDSRGKMIAPVGEGNGGRKRKLVQSNEQKNDIQREEDGRAKRRIVQSSDQK) is disordered. Positions 82–128 (QSRFSWYEQDIWTYISRFLDGKSLVKLGATNKWFYKIAMEDTVWRFA) constitute an F-box; degenerate domain.

Interacts with SKP1A. In terms of tissue distribution, expressed in flower buds, developing anthers, pollen grains, siliques, rosette leaves and roots. Detected at lower levels in open flowers, stems and cauline leaves. Expressed in young seedling in the hydathodes, shoot apical meristem, root tips and lateral root primordia.

It localises to the nucleus. Functionally, regulates tapetum degeneration and pollen maturation during anther development. This chain is Probable F-box protein At3g61730 (RMF), found in Arabidopsis thaliana (Mouse-ear cress).